The primary structure comprises 379 residues: MAKRDYYEVLGVSRDAEEREIKKAYKRLAMKFHPDRKSEDKNAEEKFKEAKEAYEILTDAQKRAAYDQYGHAAFEQGGMGGGGFGGGGGGADFSDIFGDVFGDIFGGGRRQQRASRGSDLRYNMDLTLEEAVRGVTKEIRIPTLDECDVCHGSGAKPGSSPVTCPTCHGAGQVQMRQGFFTVQQACPHCHGRGQIIKDPCNKCHGHGRVEKSKTLSVKIPAGVDTGDRIRLSGEGEAGEHGAPSGDLYVQVQVKAHPIFEREGNNLYCEVPINFAMAALGGEIEVPTLDGRVKLKIPAETQTGKMFRMRGKGVKSVRGGSQGDLLCRVVVETPVSLSEKQKQLLRELEESFVGAAGEKNSPRAKSFLDGVKKFFDDLTR.

One can recognise a J domain in the interval 5–70 (DYYEVLGVSR…QKRAAYDQYG (66 aa)). A CR-type zinc finger spans residues 134 to 212 (GVTKEIRIPT…CHGHGRVEKS (79 aa)). Cysteine 147, cysteine 150, cysteine 164, cysteine 167, cysteine 186, cysteine 189, cysteine 200, and cysteine 203 together coordinate Zn(2+). CXXCXGXG motif repeat units follow at residues 147-154 (CDVCHGSG), 164-171 (CPTCHGAG), 186-193 (CPHCHGRG), and 200-207 (CNKCHGHG).

The protein belongs to the DnaJ family. As to quaternary structure, homodimer. Zn(2+) serves as cofactor.

It localises to the cytoplasm. In terms of biological role, participates actively in the response to hyperosmotic and heat shock by preventing the aggregation of stress-denatured proteins and by disaggregating proteins, also in an autonomous, DnaK-independent fashion. Unfolded proteins bind initially to DnaJ; upon interaction with the DnaJ-bound protein, DnaK hydrolyzes its bound ATP, resulting in the formation of a stable complex. GrpE releases ADP from DnaK; ATP binding to DnaK triggers the release of the substrate protein, thus completing the reaction cycle. Several rounds of ATP-dependent interactions between DnaJ, DnaK and GrpE are required for fully efficient folding. Also involved, together with DnaK and GrpE, in the DNA replication of plasmids through activation of initiation proteins. The sequence is that of Chaperone protein DnaJ from Yersinia pseudotuberculosis serotype O:1b (strain IP 31758).